Reading from the N-terminus, the 420-residue chain is MTSTQAIFEKVQKVKKTINTATTAEKNLALEEMAKQLLISRADILAANELDMTAAKGKISDVMLDRLYLDEERIAAMAEGIRQLIDLEDPVGQVLERTKLDNGLVISKKRVAMGVIGIIYESRPNVTSDAAALALKSGNAVVLRSGKDAYQTALAIVTALKKGLAQTKISPDCIQLVSDTSRASAQAMMKAKGYLDLLIPRGGAGLIQAVVENATVPVIETGTGIVHVYVDKDADQDKALAIIENAKTSRPSVCNAMEVLLVHEEIAAAFLPRLQKILVTDRDAAREKTVELRLDEKAAQYISGSKARPEDFDTEFLDYVLAVKLVSSLEEAVEHIEAHSTHHSDAIVTENDAAAAYFTEQVDSAAVYVNASTRFTDGGQFGLGCEMGISTQKLHARGPMGLKELSSYKYVIQGTGQVRK.

This sequence belongs to the gamma-glutamyl phosphate reductase family.

The protein resides in the cytoplasm. It catalyses the reaction L-glutamate 5-semialdehyde + phosphate + NADP(+) = L-glutamyl 5-phosphate + NADPH + H(+). Its pathway is amino-acid biosynthesis; L-proline biosynthesis; L-glutamate 5-semialdehyde from L-glutamate: step 2/2. Catalyzes the NADPH-dependent reduction of L-glutamate 5-phosphate into L-glutamate 5-semialdehyde and phosphate. The product spontaneously undergoes cyclization to form 1-pyrroline-5-carboxylate. This chain is Gamma-glutamyl phosphate reductase, found in Streptococcus gordonii (strain Challis / ATCC 35105 / BCRC 15272 / CH1 / DL1 / V288).